A 101-amino-acid polypeptide reads, in one-letter code: Small ribosomal subunit protein uS14 (101 aa).

Belongs to the universal ribosomal protein uS14 family. In terms of assembly, part of the 30S ribosomal subunit. Contacts proteins S3 and S10.

Binds 16S rRNA, required for the assembly of 30S particles and may also be responsible for determining the conformation of the 16S rRNA at the A site. The sequence is that of Small ribosomal subunit protein uS14 from Ehrlichia canis (strain Jake).